A 331-amino-acid chain; its full sequence is Endo-1,4-beta-xylanase 2 (331 aa).

An N-terminal signal peptide occupies residues 1-17 (MKASSVLLGLAPLAALA). Positions 31-329 (QQSIDALMKA…KPAYNSVVQA (299 aa)) constitute a GH10 domain. Asn105 is a glycosylation site (N-linked (GlcNAc...) asparagine). Glu159 (proton donor) is an active-site residue. Residue Glu266 is the Nucleophile of the active site. An intrachain disulfide couples Cys284 to Cys290. Asn301 carries an N-linked (GlcNAc...) asparagine glycan.

Belongs to the glycosyl hydrolase 10 (cellulase F) family.

It localises to the secreted. It catalyses the reaction Endohydrolysis of (1-&gt;4)-beta-D-xylosidic linkages in xylans.. It functions in the pathway glycan degradation; xylan degradation. In terms of biological role, endo-1,4-beta-xylanase involved in the hydrolysis of xylan, a major structural heterogeneous polysaccharide found in plant biomass representing the second most abundant polysaccharide in the biosphere, after cellulose. Accounts for approximately 70 percent of the endoxylanase activity in the culture filtrate. This is Endo-1,4-beta-xylanase 2 (XYL2) from Pyricularia grisea (Crabgrass-specific blast fungus).